The following is an 84-amino-acid chain: Antitoxin VapB30 (84 aa).

Functionally, antitoxin component of a type II toxin-antitoxin (TA) system. Upon expression in M.smegmatis neutralizes the effect of cognate toxin VapC30. This Mycobacterium tuberculosis (strain ATCC 25618 / H37Rv) protein is Antitoxin VapB30 (vapB30).